A 312-amino-acid polypeptide reads, in one-letter code: Glycerol 2-dehydrogenase (NADP(+)) (312 aa).

Residue tyrosine 56 is the Proton donor of the active site. Position 112 (histidine 112) interacts with substrate. 220-274 lines the NADP(+) pocket; it reads SPLGSTDAPLLKEPVILEIAKKNNVQPGHVVISWHVQRGYVVLPKSVNPDRIKTN. The residue at position 306 (serine 306) is a Phosphoserine.

Belongs to the aldo/keto reductase family.

The protein localises to the cytoplasm. The enzyme catalyses glycerol + NADP(+) = dihydroxyacetone + NADPH + H(+). In terms of biological role, glycerol dehydrogenase involved in glycerol catabolism under microaerobic conditions. Has mRNA binding activity. The chain is Glycerol 2-dehydrogenase (NADP(+)) (GCY1) from Saccharomyces cerevisiae (strain ATCC 204508 / S288c) (Baker's yeast).